A 355-amino-acid polypeptide reads, in one-letter code: S-adenosylmethionine:tRNA ribosyltransferase-isomerase (355 aa).

Belongs to the QueA family. Monomer.

The protein localises to the cytoplasm. It carries out the reaction 7-aminomethyl-7-carbaguanosine(34) in tRNA + S-adenosyl-L-methionine = epoxyqueuosine(34) in tRNA + adenine + L-methionine + 2 H(+). It participates in tRNA modification; tRNA-queuosine biosynthesis. In terms of biological role, transfers and isomerizes the ribose moiety from AdoMet to the 7-aminomethyl group of 7-deazaguanine (preQ1-tRNA) to give epoxyqueuosine (oQ-tRNA). The polypeptide is S-adenosylmethionine:tRNA ribosyltransferase-isomerase (Gluconacetobacter diazotrophicus (strain ATCC 49037 / DSM 5601 / CCUG 37298 / CIP 103539 / LMG 7603 / PAl5)).